The chain runs to 501 residues: Aspartate--tRNA ligase, cytoplasmic (501 aa).

At threonine 52 the chain carries Phosphothreonine. N6-acetyllysine is present on lysine 74. Residue glutamate 229 coordinates L-aspartate. Residue serine 249 is modified to Phosphoserine. The interval 251–254 (QLYK) is aspartate. Arginine 273 contributes to the L-aspartate binding site. ATP is bound by residues 273–275 (RAE) and 281–283 (RHL). At lysine 374 the chain carries N6-acetyllysine. Glutamate 424 lines the ATP pocket. The L-aspartate site is built by serine 427 and arginine 431. 472–475 (GLER) contacts ATP.

Belongs to the class-II aminoacyl-tRNA synthetase family. Type 2 subfamily. Homodimer. Part of a multisubunit complex that groups tRNA ligases for Arg (RARS1), Asp (DARS1), Gln (QARS1), Ile (IARS1), Leu (LARS1), Lys (KARS1), Met (MARS1) the bifunctional ligase for Glu and Pro (EPRS1) and the auxiliary subunits AIMP1/p43, AIMP2/p38 and EEF1E1/p18.

The protein resides in the cytoplasm. It carries out the reaction tRNA(Asp) + L-aspartate + ATP = L-aspartyl-tRNA(Asp) + AMP + diphosphate. In terms of biological role, catalyzes the specific attachment of an amino acid to its cognate tRNA in a 2 step reaction: the amino acid (AA) is first activated by ATP to form AA-AMP and then transferred to the acceptor end of the tRNA. The chain is Aspartate--tRNA ligase, cytoplasmic (Dars1) from Mus musculus (Mouse).